Consider the following 242-residue polypeptide: MEFDPTKINISSIDHVTILQYIDEPNDIRLTVCIIQNINNITYYINITKINPHLANQFRAWKKRIAGRDYMTNLSRDTGIQQSNLTETIRNCQKNRNIYGLYIHYNLVINVVIDWITDVIVQSILRGLVNWYIDNNTYTPNTPNNTTTISELDIIKILDKYEDVYKVSKEKECGICYEVVYSKRLENDRYFGLLDSCNHIFCITCINIWHRTRRETGASDNCPICRTRFRNITMSKFYKLVN.

The KilA-N domain maps to 21–131 (YIDEPNDIRL…QSILRGLVNW (111 aa)). The segment at 173–226 (CGICYEVVYSKRLENDRYFGLLDSCNHIFCITCINIWHRTRRETGASDNCPICR) adopts an RING-type zinc-finger fold.

Belongs to the orthopoxvirus OPG021 family.

Its subcellular location is the host cytoplasm. The catalysed reaction is S-ubiquitinyl-[E2 ubiquitin-conjugating enzyme]-L-cysteine + [acceptor protein]-L-lysine = [E2 ubiquitin-conjugating enzyme]-L-cysteine + N(6)-ubiquitinyl-[acceptor protein]-L-lysine.. Functionally, RING-finger E3 ubiquitin ligase which catalyzes the formation of both 'Lys-48'- and 'Lys-63'-linked polyubiquitin chains. Plays an important role in virulence by acting as an anti-apoptotic factor. This chain is Host range factor p28 (OPG021), found in Homo sapiens (Human).